A 195-amino-acid chain; its full sequence is FK506-binding protein 2 (195 aa).

A signal peptide spans M1–A19. One can recognise a PPIase FKBP-type domain in the interval G39–D127. Positions H192–L195 match the Prevents secretion from ER motif.

Belongs to the FKBP-type PPIase family. FKBP2 subfamily.

The protein localises to the endoplasmic reticulum. It carries out the reaction [protein]-peptidylproline (omega=180) = [protein]-peptidylproline (omega=0). With respect to regulation, inhibited by both FK506 and rapamycin. In terms of biological role, PPIases accelerate the folding of proteins. It catalyzes the cis-trans isomerization of proline imidic peptide bonds in oligopeptides. This is FK506-binding protein 2 (FPR2) from Gibberella zeae (strain ATCC MYA-4620 / CBS 123657 / FGSC 9075 / NRRL 31084 / PH-1) (Wheat head blight fungus).